Consider the following 100-residue polypeptide: MTPWFLYLIRTADNKLYTGITTDVERRYQQHQSGKGAKALRGKGELTLAFSAPVGDRSLALRAEYRVKQLTKRQKERLVAESAGFAELLSSLQTPEIKSD.

Residues Thr-2–Arg-77 form the GIY-YIG domain.

This sequence belongs to the UPF0213 family.

In Escherichia coli O139:H28 (strain E24377A / ETEC), this protein is UPF0213 protein YhbQ.